Consider the following 325-residue polypeptide: MATH domain and coiled-coil domain-containing protein At3g58430 (325 aa).

In terms of domain architecture, MATH spans 6-131; the sequence is HKKFCWIIKN…KGDFKIIAEV (126 aa). Residues 258-306 adopt a coiled-coil conformation; it reads FKVDWLEKKLDQVKDKKEREQSGLARLHELEEYLLKLKQKCSNLDLLVE.

In Arabidopsis thaliana (Mouse-ear cress), this protein is MATH domain and coiled-coil domain-containing protein At3g58430.